Here is an 872-residue protein sequence, read N- to C-terminus: Metabotropic glutamate receptor 2 (872 aa).

A signal peptide spans 1–18; the sequence is MGSLLALLALLLLWGAVA. The Extracellular portion of the chain corresponds to 19–567; sequence EGPAKKVLTL…QEYIRWGDAW (549 aa). Cysteine 50 and cysteine 92 are joined by a disulfide. Residues arginine 57, arginine 61, serine 145, alanine 166, and threonine 168 each coordinate L-glutamate. Residues asparagine 203 and asparagine 286 are each glycosylated (N-linked (GlcNAc...) asparagine). Cystine bridges form between cysteine 234-cysteine 518, cysteine 355-cysteine 362, cysteine 400-cysteine 407, cysteine 500-cysteine 519, cysteine 504-cysteine 522, cysteine 525-cysteine 537, and cysteine 540-cysteine 553. Position 295 (aspartate 295) interacts with L-glutamate. The N-linked (GlcNAc...) asparagine glycan is linked to asparagine 338. L-glutamate is bound at residue lysine 377. The N-linked (GlcNAc...) asparagine glycan is linked to asparagine 402. Asparagine 547 carries N-linked (GlcNAc...) asparagine glycosylation. The chain crosses the membrane as a helical span at residues 568–590; that stretch reads AVGPVTIACLGALATLFVLGVFV. The Cytoplasmic segment spans residues 591–604; it reads RHNATPVVKASGRE. Residues 605 to 625 form a helical membrane-spanning segment; it reads LCYILLGGVFLCYCMTFIFIA. At 626-636 the chain is on the extracellular side; it reads KPSTAVCTLRR. An intrachain disulfide couples cysteine 632 to cysteine 721. The helical transmembrane segment at 637-655 threads the bilayer; it reads LGLGTAFSVCYSALLTKTN. The Cytoplasmic segment spans residues 656-679; the sequence is RIARIFGGAREGAQRPRFISPASQ. Residues 677 to 685 are important for interaction with HTR2A; sequence ASQVAICLA. Residues 680 to 700 form a helical membrane-spanning segment; sequence VAICLALISGQLLIVVAWLVV. Topologically, residues 701-725 are extracellular; sequence EAPGTGKETAPERREVVTLRCNHRD. The helical transmembrane segment at 726–747 threads the bilayer; the sequence is ASMLGSLAYNVLLIALCTLYAF. At 748–760 the chain is on the cytoplasmic side; that stretch reads KTRKCPENFNEAK. A helical transmembrane segment spans residues 761-783; it reads FIGFTMYTTCIIWLAFLPIFYVT. The Extracellular segment spans residues 784 to 793; sequence SSDYRVQTTT. A helical transmembrane segment spans residues 794–819; the sequence is MCVSVSLSGSVVLGCLFAPKLHIILF. At 820 to 872 the chain is on the cytoplasmic side; sequence QPQKNVVSHRAPTSRFGSAAARASSSLGQGSGSQFVPTVCNGREVVDSTTSSL.

Belongs to the G-protein coupled receptor 3 family. Forms heterodimers with GRM3 or GRM4. Interacts with TAMALIN. Interacts with HTR2A. In terms of assembly, (Microbial infection) Interacts with H5N6 virus protein HA. As to quaternary structure, (Microbial infection) Interacts with rabies virus protein G. (Microbial infection) Interacts with SARS-CoV-2 virus spike protein S. Detected in brain cortex (at protein level). Widely expressed in different regions of the adult brain as well as in fetal brain.

It localises to the cell membrane. The protein resides in the synapse. It is found in the cell projection. The protein localises to the dendrite. In terms of biological role, dimeric G protein-coupled receptor which is activated by the excitatory neurotransmitter L-glutamate. Plays critical roles in modulating synaptic transmission and neuronal excitability. Upon activation by glutamate, inhibits presynaptic calcium channels, reducing further glutamate release and dampening excitatory signaling. Mechanistically, ligand binding causes a conformation change that triggers signaling via guanine nucleotide-binding proteins (G proteins) and modulates the activity of down-stream effectors, such as adenylate cyclase. May mediate suppression of neurotransmission or may be involved in synaptogenesis or synaptic stabilization. Its function is as follows. (Microbial infection) Plays an important role in influenza virus internalization. (Microbial infection) Acts as a host entry factor for rabies virus that hijacks the endocytosis of GRM2 to enter cells. Functionally, (Microbial infection) Acts as a host entry factor for SARS-CoV-2 that hijacks the endocytosis of GRM2 to enter cells. In Homo sapiens (Human), this protein is Metabotropic glutamate receptor 2.